Here is a 569-residue protein sequence, read N- to C-terminus: Putative ABC transporter ATP-binding protein TTE1589 (569 aa).

2 ABC transporter domains span residues 8–248 and 309–542; these read IIVK…IGLM and IQAK…LSLK. ATP is bound by residues 43–50 and 342–349; these read GPSGAGKS and GHNGSGKT.

The protein belongs to the ABC transporter superfamily.

It is found in the cell membrane. Functionally, probably part of an ABC transporter complex. Responsible for energy coupling to the transport system. The protein is Putative ABC transporter ATP-binding protein TTE1589 of Caldanaerobacter subterraneus subsp. tengcongensis (strain DSM 15242 / JCM 11007 / NBRC 100824 / MB4) (Thermoanaerobacter tengcongensis).